We begin with the raw amino-acid sequence, 609 residues long: Manganese lipoxygenase (609 aa).

The N-terminal stretch at 1–16 (MRLLLSIAGLTTVVNA) is a signal peptide. N-linked (GlcNAc...) asparagine glycosylation is found at asparagine 24, asparagine 115, asparagine 156, and asparagine 193. One can recognise a Lipoxygenase domain in the interval 117-609 (SLKAIQDHGG…PGVIPFYLSV (493 aa)). Histidine 289 and histidine 294 together coordinate Mn(2+). An N-linked (GlcNAc...) asparagine glycan is attached at asparagine 385. Positions 474 and 478 each coordinate Mn(2+). The N-linked (GlcNAc...) asparagine glycan is linked to asparagine 539. Valine 609 contacts Mn(2+).

The protein belongs to the lipoxygenase family. Manganese lipoxygenase subfamily. Mn(2+) serves as cofactor. In terms of processing, N- and O-glycosylated.

It localises to the secreted. It carries out the reaction (9Z,12Z)-octadecadienoate + O2 = (9S)-hydroperoxy-(10E,12Z)-octadecadienoate. The enzyme catalyses (9Z,12Z)-octadecadienoate + O2 = (11S)-hydroperoxy-(9Z,12Z)-octadecadienoate. The catalysed reaction is (9Z,12Z)-octadecadienoate + O2 = (13R)-hydroperoxy-(9Z,11E)-octadecadienoate. It catalyses the reaction (9Z,12Z,15Z)-octadecatrienoate + O2 = (11R)-hydroperoxy-(9Z,12Z,15Z)-octadecatrienoate. Lipoxygenase that metabolizes linoleic and alpha-linolenic acids to 9-, 11- and 13-hydroperoxy fatty acids. Oxidizes linoleic acid to mainly 9S- and 13R-HPODE and alpha-linolenic acid to 11R-HPOTrE. The sequence is that of Manganese lipoxygenase from Colletotrichum gloeosporioides (strain Cg-14) (Anthracnose fungus).